We begin with the raw amino-acid sequence, 461 residues long: Chromosomal replication initiator protein DnaA (461 aa).

The interval 1–83 (MDHSPWQRCL…LRFDVGSKPT (83 aa)) is domain I, interacts with DnaA modulators. The segment at 83-124 (TIDNSVTNSPVSRNTGGNESLFAKATSAPKVAEPESNIPKKT) is domain II. The tract at residues 125 to 341 (NVRLNYTFEN…GALNRVIANA (217 aa)) is domain III, AAA+ region. ATP contacts are provided by glycine 169, glycine 171, lysine 172, and threonine 173. A domain IV, binds dsDNA region spans residues 342–461 (NFTGRAITID…YSNLIRTLSS (120 aa)).

This sequence belongs to the DnaA family. Oligomerizes as a right-handed, spiral filament on DNA at oriC.

Its subcellular location is the cytoplasm. Functionally, plays an essential role in the initiation and regulation of chromosomal replication. ATP-DnaA binds to the origin of replication (oriC) to initiate formation of the DNA replication initiation complex once per cell cycle. Binds the DnaA box (a 9 base pair repeat at the origin) and separates the double-stranded (ds)DNA. Forms a right-handed helical filament on oriC DNA; dsDNA binds to the exterior of the filament while single-stranded (ss)DNA is stabiized in the filament's interior. The ATP-DnaA-oriC complex binds and stabilizes one strand of the AT-rich DNA unwinding element (DUE), permitting loading of DNA polymerase. After initiation quickly degrades to an ADP-DnaA complex that is not apt for DNA replication. Binds acidic phospholipids. This Colwellia psychrerythraea (strain 34H / ATCC BAA-681) (Vibrio psychroerythus) protein is Chromosomal replication initiator protein DnaA.